The primary structure comprises 293 residues: Triosephosphate isomerase (293 aa).

Position 25–27 (25–27 (NWK)) interacts with substrate. The active-site Electrophile is His117. The Proton acceptor role is filled by Glu218.

Belongs to the triosephosphate isomerase family. As to quaternary structure, homodimer.

The protein localises to the cytoplasm. It catalyses the reaction D-glyceraldehyde 3-phosphate = dihydroxyacetone phosphate. It participates in carbohydrate biosynthesis; gluconeogenesis. It functions in the pathway carbohydrate degradation; glycolysis; D-glyceraldehyde 3-phosphate from glycerone phosphate: step 1/1. Functionally, involved in the gluconeogenesis. Catalyzes stereospecifically the conversion of dihydroxyacetone phosphate (DHAP) to D-glyceraldehyde-3-phosphate (G3P). The polypeptide is Triosephosphate isomerase (Tropheryma whipplei (strain TW08/27) (Whipple's bacillus)).